Reading from the N-terminus, the 60-residue chain is Large ribosomal subunit protein bL32 (60 aa).

Basic residues predominate over residues 1–20; it reads MACPKKKTSKSKRSMRRAAW. The interval 1–22 is disordered; it reads MACPKKKTSKSKRSMRRAAWKR.

The protein belongs to the bacterial ribosomal protein bL32 family.

In Thermosynechococcus vestitus (strain NIES-2133 / IAM M-273 / BP-1), this protein is Large ribosomal subunit protein bL32.